The following is a 482-amino-acid chain: UDP-glycosyltransferase 86A2 (482 aa).

UDP-alpha-D-glucose is bound by residues S297, 355–357 (CCQ), 372–380 (HCGWNSILE), and 394–397 (LTDQ).

Belongs to the UDP-glycosyltransferase family.

The polypeptide is UDP-glycosyltransferase 86A2 (UGT86A2) (Arabidopsis thaliana (Mouse-ear cress)).